A 385-amino-acid polypeptide reads, in one-letter code: Probable tRNA sulfurtransferase (385 aa).

The region spanning 57-160 (DGVIERVKKV…RGNAYVFTDK (104 aa)) is the THUMP domain. ATP contacts are provided by residues 180-181 (ML), 205-206 (YY), Arg-262, Gly-284, and Gln-293.

This sequence belongs to the ThiI family.

It is found in the cytoplasm. The catalysed reaction is [ThiI sulfur-carrier protein]-S-sulfanyl-L-cysteine + a uridine in tRNA + 2 reduced [2Fe-2S]-[ferredoxin] + ATP + H(+) = [ThiI sulfur-carrier protein]-L-cysteine + a 4-thiouridine in tRNA + 2 oxidized [2Fe-2S]-[ferredoxin] + AMP + diphosphate. The enzyme catalyses [ThiS sulfur-carrier protein]-C-terminal Gly-Gly-AMP + S-sulfanyl-L-cysteinyl-[cysteine desulfurase] + AH2 = [ThiS sulfur-carrier protein]-C-terminal-Gly-aminoethanethioate + L-cysteinyl-[cysteine desulfurase] + A + AMP + 2 H(+). It participates in cofactor biosynthesis; thiamine diphosphate biosynthesis. Functionally, catalyzes the ATP-dependent transfer of a sulfur to tRNA to produce 4-thiouridine in position 8 of tRNAs, which functions as a near-UV photosensor. Also catalyzes the transfer of sulfur to the sulfur carrier protein ThiS, forming ThiS-thiocarboxylate. This is a step in the synthesis of thiazole, in the thiamine biosynthesis pathway. The sulfur is donated as persulfide by IscS. The polypeptide is Probable tRNA sulfurtransferase (Clostridium perfringens (strain SM101 / Type A)).